We begin with the raw amino-acid sequence, 564 residues long: Acetylcholine receptor subunit alpha-type deg-3 (564 aa).

The first 20 residues, 1-20, serve as a signal peptide directing secretion; it reads MTLKIRTIIILFCVISVTTT. Residues 21-268 are Extracellular-facing; the sequence is SQSLNATLKT…SLVIQRKPLY (248 aa). N-linked (GlcNAc...) asparagine glycans are attached at residues asparagine 25, asparagine 37, asparagine 125, and asparagine 198. 2 disulfides stabilise this stretch: cysteine 185–cysteine 199 and cysteine 248–cysteine 249. The next 3 helical transmembrane spans lie at 269–289, 302–319, and 329–353; these read YLVN…TGFF, INLG…MLMV, and FVPL…LTSV. The Cytoplasmic portion of the chain corresponds to 354–526; the sequence is VLSVQGRRQY…WEFLATVLDR (173 aa). The chain crosses the membrane as a helical span at residues 527–547; the sequence is FLLIVFVGAVVIVTAGLILVG.

This sequence belongs to the ligand-gated ion channel (TC 1.A.9) family. Acetylcholine receptor (TC 1.A.9.1) subfamily. In terms of assembly, the functional receptor is a heteromer of deg-3 and des-2. Interacts with ric-3; which is required for proper receptor folding.

It is found in the postsynaptic cell membrane. Its subcellular location is the cell membrane. Its function is as follows. Subunit of the non-synaptic neuronal acetylcholine receptor, which may play a role in chemotaxis towards choline. After binding choline or acetylcholine, the AChR responds by an extensive change in conformation that affects all subunits and leads to opening of an ion-conducting channel across the plasma membrane. This Caenorhabditis elegans protein is Acetylcholine receptor subunit alpha-type deg-3 (deg-3).